Here is a 257-residue protein sequence, read N- to C-terminus: Cytochrome c oxidase subunit 3 (257 aa).

The next 6 helical transmembrane spans lie at 13–33 (PWPI…VSYF), 36–56 (LSMY…FQWW), 80–100 (GMIL…WAFF), 154–174 (YISA…FTMF), 195–215 (FFMT…FLLV), and 237–257 (AWYW…MYWW).

It belongs to the cytochrome c oxidase subunit 3 family. As to quaternary structure, component of the cytochrome c oxidase (complex IV, CIV), a multisubunit enzyme composed of a catalytic core of 3 subunits and several supernumerary subunits. The complex exists as a monomer or a dimer and forms supercomplexes (SCs) in the inner mitochondrial membrane with ubiquinol-cytochrome c oxidoreductase (cytochrome b-c1 complex, complex III, CIII).

The protein localises to the mitochondrion inner membrane. The catalysed reaction is 4 Fe(II)-[cytochrome c] + O2 + 8 H(+)(in) = 4 Fe(III)-[cytochrome c] + 2 H2O + 4 H(+)(out). In terms of biological role, component of the cytochrome c oxidase, the last enzyme in the mitochondrial electron transport chain which drives oxidative phosphorylation. The respiratory chain contains 3 multisubunit complexes succinate dehydrogenase (complex II, CII), ubiquinol-cytochrome c oxidoreductase (cytochrome b-c1 complex, complex III, CIII) and cytochrome c oxidase (complex IV, CIV), that cooperate to transfer electrons derived from NADH and succinate to molecular oxygen, creating an electrochemical gradient over the inner membrane that drives transmembrane transport and the ATP synthase. Cytochrome c oxidase is the component of the respiratory chain that catalyzes the reduction of oxygen to water. Electrons originating from reduced cytochrome c in the intermembrane space (IMS) are transferred via the dinuclear copper A center (CU(A)) of subunit 2 and heme A of subunit 1 to the active site in subunit 1, a binuclear center (BNC) formed by heme A3 and copper B (CU(B)). The BNC reduces molecular oxygen to 2 water molecules using 4 electrons from cytochrome c in the IMS and 4 protons from the mitochondrial matrix. The protein is Cytochrome c oxidase subunit 3 (COIII) of Rhipicephalus sanguineus (Brown dog tick).